A 244-amino-acid chain; its full sequence is 5-oxoprolinase subunit A (244 aa).

The protein belongs to the LamB/PxpA family. As to quaternary structure, forms a complex composed of PxpA, PxpB and PxpC.

The enzyme catalyses 5-oxo-L-proline + ATP + 2 H2O = L-glutamate + ADP + phosphate + H(+). Functionally, catalyzes the cleavage of 5-oxoproline to form L-glutamate coupled to the hydrolysis of ATP to ADP and inorganic phosphate. This chain is 5-oxoprolinase subunit A, found in Salmonella arizonae (strain ATCC BAA-731 / CDC346-86 / RSK2980).